The sequence spans 475 residues: Ribulose bisphosphate carboxylase large chain (475 aa).

A propeptide spanning residues 1–2 (MS) is cleaved from the precursor. An N-acetylproline modification is found at P3. K14 is subject to N6,N6,N6-trimethyllysine. 2 residues coordinate substrate: N123 and T173. K175 acts as the Proton acceptor in catalysis. K177 lines the substrate pocket. 3 residues coordinate Mg(2+): K201, D203, and E204. At K201 the chain carries N6-carboxylysine. H294 functions as the Proton acceptor in the catalytic mechanism. The substrate site is built by R295, H327, and S379.

Belongs to the RuBisCO large chain family. Type I subfamily. As to quaternary structure, heterohexadecamer of 8 large chains and 8 small chains; disulfide-linked. The disulfide link is formed within the large subunit homodimers. It depends on Mg(2+) as a cofactor. In terms of processing, the disulfide bond which can form in the large chain dimeric partners within the hexadecamer appears to be associated with oxidative stress and protein turnover.

It is found in the plastid. It localises to the chloroplast. The enzyme catalyses 2 (2R)-3-phosphoglycerate + 2 H(+) = D-ribulose 1,5-bisphosphate + CO2 + H2O. It carries out the reaction D-ribulose 1,5-bisphosphate + O2 = 2-phosphoglycolate + (2R)-3-phosphoglycerate + 2 H(+). RuBisCO catalyzes two reactions: the carboxylation of D-ribulose 1,5-bisphosphate, the primary event in carbon dioxide fixation, as well as the oxidative fragmentation of the pentose substrate in the photorespiration process. Both reactions occur simultaneously and in competition at the same active site. The protein is Ribulose bisphosphate carboxylase large chain of Carica papaya (Papaya).